The sequence spans 837 residues: Amyloid-beta A4 precursor protein-binding family A member 1 (837 aa).

Disordered regions lie at residues 1 to 93 (MNHL…DTAE), 238 to 342 (YDER…SKEK), and 358 to 435 (EEVK…ESRK). Acidic residues predominate over residues 23-38 (ESVEADLEHPEVEEEQ). S78, S242, S246, S248, S263, S280, and S285 each carry phosphoserine. The munc-18-1 binding stretch occupies residues 226–314 (YRQEALGARL…TPAGGRPDSP (89 aa)). Positions 238 to 254 (YDERSDGESDSPEKEAE) are enriched in basic and acidic residues. T305 bears the Phosphothreonine mark. Residues S313 and S367 each carry the phosphoserine modification. T370 is subject to Phosphothreonine. The interval 373 to 436 (EPKEPIWVMR…ASTNKESRKS (64 aa)) is LIN-2/CASK binding. A compositionally biased stretch (basic and acidic residues) spans 387–398 (PTRDCDDQRPMD). Residues 399–418 (GDSPSPGSSSPLGAESSSTS) are compositionally biased toward low complexity. 4 positions are modified to phosphoserine: S401, S403, S408, and S568. A PID domain is found at 457-643 (DGIIFAANYL…LLNTQDMYND (187 aa)). An autoinhibitory helix linker region spans residues 626–641 (LSQKEYSDLLNTQDMY). PDZ domains follow at residues 656–742 (DVFI…IVRC) and 747–822 (TVLI…TMPA).

In terms of assembly, part of a multimeric complex containing STXBP1 and STX1A. Interacts with STXBP1. Also part of the brain-specific heterotrimeric complex LIN-10/X11-alpha, LIN-2/CASK, and LIN7. Component of the brain-specific heterotrimeric complex (LIN-10-LIN-2-LIN-7 complex) composed of at least APBA1, CASK, and LIN7, which associates with the motor protein KIF17 to transport vesicles along microtubules. Within the complex, interacts (via PDZ domain) with the motor protein KIF17; the interaction is direct and is required for association of KIF17 with the cargo that is to be transported. Both isoform 1 and isoform 2 bind to the cytoplasmic domain of amyloid protein (APP). Interacts (via PDZ 1 and 2 domains) with FSPB. Isoform 2, but not isoform 1, interacts (via its truncated PID domain) with active, GTP-bound RAB6A and RAB6B. Brain and spinal cord. Isoform 2 is expressed in testis and brain, but not detected in lung, liver or spleen.

It localises to the cytoplasm. It is found in the perinuclear region. The protein localises to the nucleus. Its subcellular location is the golgi apparatus. In terms of biological role, putative function in synaptic vesicle exocytosis by binding to Munc18-1, an essential component of the synaptic vesicle exocytotic machinery. May modulate processing of the amyloid-beta precursor protein (APP) and hence formation of APP-beta. Component of the LIN-10-LIN-2-LIN-7 complex, which associates with the motor protein KIF17 to transport vesicles containing N-methyl-D-aspartate (NMDA) receptor subunit NR2B along microtubules. This is Amyloid-beta A4 precursor protein-binding family A member 1 (APBA1) from Homo sapiens (Human).